The primary structure comprises 482 residues: Probable F-box protein At1g30780 (482 aa).

In terms of domain architecture, F-box spans Glu230–Ser280.

The sequence is that of Probable F-box protein At1g30780 from Arabidopsis thaliana (Mouse-ear cress).